The primary structure comprises 341 residues: Transcription factor VIP1 (341 aa).

Disordered regions lie at residues 1–33, 59–106, and 135–156; these read MEGG…HRRA, SLDF…PEAR, and SSGE…DGEM. The necessary and sufficient for transient T-DNA transformation end expression stretch occupies residues 1–162; that stretch reads MEGGGRGPNQ…DGEMSSASFN (162 aa). Positions 15–24 are enriched in basic and acidic residues; that stretch reads EIEHMPEAPR. Low complexity predominate over residues 71 to 80; sequence QSQQQPQASP. Serine 79 bears the Phosphoserine mark. Residues 163–341 form an involved in homomultimerization and histone H2A binding region; sequence IESILASVSG…PSYMDFTKRG (179 aa). In terms of domain architecture, bZIP spans 194-257; that stretch reads DPKRAKRILA…SELNTENKHL (64 aa). The tract at residues 196 to 217 is basic motif; it reads KRAKRILANRQSAARSKERKIR. The Nuclear localization signal motif lies at 198 to 205; it reads AKRILANR. Positions 222 to 257 are leucine-zipper; the sequence is LERKVQTLQNEATTLSAQVTMLQRGTSELNTENKHL. A compositionally biased stretch (polar residues) spans 307 to 331; that stretch reads SQQSAMNQFGNKTNQQMSTNGQPSL. Residues 307–341 are disordered; that stretch reads SQQSAMNQFGNKTNQQMSTNGQPSLPSYMDFTKRG.

Belongs to the bZIP family. As to quaternary structure, forms homomultimers. Interacts with Agrobacterium tumefaciens VirE2 and mediates its translocation to the host nucleus. Binds to VIP2. Forms a complex made of Agrobacterium VirE2, VIP1, VIP2 and single-stranded DNA (ssDNA). The interaction with KAP1 mediates its nuclear import. Binds to the H2A histone RAT5. Interacts with MPK3 and Agrobacterium virF. Forms a complex made of VIP1, VBF and Agrobacterium virE2. Interacts with SCF(VBF) E3 ubiquitin ligase complex. Binds directly to VBF. Forms heterodimers with BZIP34 and BZIP61. Phosphorylated by MPK3. This phosphorylation promotes nuclear localization. Mostly expressed in dividing cells, present in leaves, roots and seedlings.

It is found in the cytoplasm. Its subcellular location is the nucleus. Functionally, transcription activator that binds specifically to the VIP1 response elements (VREs) DNA sequence 5'-ACNGCT-3' found in some stress genes (e.g. TRX8 and MYB44), when phosphorylated/activated by MPK3. Required for Agrobacterium VirE2 nuclear import and tumorigenicity. Promotes transient expression of T-DNA in early stages by interacting with VirE2 in complex with the T-DNA and facilitating its translocation to the nucleus, and mediates stable genetic transformation by Agrobacterium by binding H2A histone. Prevents cell differentiation and shoot formation. Limits sulfate utilization efficiency (SUE) and sulfate uptake, especially in low-sulfur conditions. Plays a role in osmosensory response by binding to the 5'-AGCTGT/G-3' DNA sequence found in the promoters of the hypoosmolarity-responsive genes CYP707A1 and CYP707A3. Involved in the negative regulation of touch-induced root bending and salt-dependent root bending. In Arabidopsis thaliana (Mouse-ear cress), this protein is Transcription factor VIP1.